The chain runs to 872 residues: Probably inactive leucine-rich repeat receptor-like protein kinase At5g06940 (872 aa).

Residues 1-26 form the signal peptide; that stretch reads MATRFKHQFSISLALTFFFFFTKTFS. At 27-540 the chain is on the extracellular side; the sequence is FTENEELGNL…RSNFHKKGGK (514 aa). N-linked (GlcNAc...) asparagine glycosylation is found at N55, N63, and N86. 18 LRR repeats span residues 79 to 98, 99 to 122, 123 to 146, 147 to 169, 171 to 193, 195 to 217, 219 to 243, 244 to 267, 269 to 292, 294 to 316, 317 to 340, 341 to 365, 367 to 389, 391 to 412, 413 to 435, 436 to 459, 460 to 482, and 484 to 506; these read SINLQSLNLSGEISDSICDL, PYLTHLDLSLNFFNQPIPLQLSRC, VTLETLNLSSNLIWGTIPDQISEF, SSLKVIDFSSNHVEGMIPEDLGL, FNLQVLNLGSNLLTGIVPPAIGK, SELVVLDLSENSYLVSEIPSFLG, LDKLEQLLLHRSGFHGEIPTSFVGL, TSLRTLDLSLNNLSGEIPRSLGPS, KNLVSLDVSQNKLSGSFPSGICSG, RLINLSLHSNFFEGSLPNSIGEC, LSLERLQVQNNGFSGEFPVVLWKL, PRIKIIRADNNRFTGQVPESVSLAS, LEQVEIVNNSFSGEIPHGLGLVK, LYKFSASQNRFSGELPPNFCDS, PVLSIVNISHNRLLGKIPELKNC, KKLVSLSLAGNAFTGEIPPSLADL, HVLTYLDLSDNSLTGLIPQGLQN, and KLALFNVSFNGLSGEVPHSLVSG. A glycan (N-linked (GlcNAc...) asparagine) is linked at N129. N-linked (GlcNAc...) asparagine glycosylation is present at N255. N-linked (GlcNAc...) asparagine glycosylation is present at N297. N374 carries an N-linked (GlcNAc...) asparagine glycan. Residue N419 is glycosylated (N-linked (GlcNAc...) asparagine). A glycan (N-linked (GlcNAc...) asparagine) is linked at N489. Residues 541–561 traverse the membrane as a helical segment; the sequence is ALVLSLICLALAIATFLAVLY. Residues 562–872 are Cytoplasmic-facing; the sequence is RYSRKKVQFK…ISSSVSPVSA (311 aa). The residue at position 585 (T585) is a Phosphothreonine. The Protein kinase domain maps to 589-863; sequence LMKVVNESCP…VKVIKLLEGI (275 aa). ATP is bound by residues 595-603 and K617; that span reads ESCPSGSEV. 4 positions are modified to phosphotyrosine: Y662, Y699, Y754, and Y761.

The protein belongs to the protein kinase superfamily. Ser/Thr protein kinase family.

The protein resides in the membrane. This is Probably inactive leucine-rich repeat receptor-like protein kinase At5g06940 from Arabidopsis thaliana (Mouse-ear cress).